The following is a 290-amino-acid chain: Ribosomal RNA small subunit methyltransferase A (290 aa).

Asn27, Leu29, Gly54, Glu75, Asp100, and Asn125 together coordinate S-adenosyl-L-methionine.

This sequence belongs to the class I-like SAM-binding methyltransferase superfamily. rRNA adenine N(6)-methyltransferase family. RsmA subfamily.

It is found in the cytoplasm. The catalysed reaction is adenosine(1518)/adenosine(1519) in 16S rRNA + 4 S-adenosyl-L-methionine = N(6)-dimethyladenosine(1518)/N(6)-dimethyladenosine(1519) in 16S rRNA + 4 S-adenosyl-L-homocysteine + 4 H(+). Functionally, specifically dimethylates two adjacent adenosines (A1518 and A1519) in the loop of a conserved hairpin near the 3'-end of 16S rRNA in the 30S particle. May play a critical role in biogenesis of 30S subunits. In Streptococcus gordonii (strain Challis / ATCC 35105 / BCRC 15272 / CH1 / DL1 / V288), this protein is Ribosomal RNA small subunit methyltransferase A.